A 331-amino-acid chain; its full sequence is Thiamine thiazole synthase (331 aa).

Substrate-binding positions include C86, 107-108, G115, and V183; that span reads EA. C220 is subject to 2,3-didehydroalanine (Cys). Substrate-binding positions include D222, H237, M289, and 299 to 301; that span reads RMG.

Belongs to the THI4 family. In terms of assembly, homooctamer. Fe cation serves as cofactor. In terms of processing, during the catalytic reaction, a sulfide is transferred from Cys-220 to a reaction intermediate, generating a dehydroalanine residue.

The protein localises to the cytoplasm. The protein resides in the nucleus. The enzyme catalyses [ADP-thiazole synthase]-L-cysteine + glycine + NAD(+) = [ADP-thiazole synthase]-dehydroalanine + ADP-5-ethyl-4-methylthiazole-2-carboxylate + nicotinamide + 3 H2O + 2 H(+). In terms of biological role, involved in biosynthesis of the thiamine precursor thiazole. Catalyzes the conversion of NAD and glycine to adenosine diphosphate 5-(2-hydroxyethyl)-4-methylthiazole-2-carboxylic acid (ADT), an adenylated thiazole intermediate. The reaction includes an iron-dependent sulfide transfer from a conserved cysteine residue of the protein to a thiazole intermediate. The enzyme can only undergo a single turnover, which suggests it is a suicide enzyme. May have additional roles in adaptation to various stress conditions and in DNA damage tolerance. In Emericella nidulans (strain FGSC A4 / ATCC 38163 / CBS 112.46 / NRRL 194 / M139) (Aspergillus nidulans), this protein is Thiamine thiazole synthase.